The chain runs to 288 residues: Undecaprenyl-diphosphatase (288 aa).

Helical transmembrane passes span 11 to 31 (LDLW…FLPI), 49 to 69 (PGVA…LSYF), 94 to 114 (AQMG…GLLI), 129 to 149 (LAAI…AEQL), 159 to 179 (LRLA…IPGV), 199 to 219 (AARF…LVEL), 234 to 254 (VLAI…AWLL), and 265 to 285 (FVVY…TGTL).

It belongs to the UppP family.

The protein resides in the cell inner membrane. It catalyses the reaction di-trans,octa-cis-undecaprenyl diphosphate + H2O = di-trans,octa-cis-undecaprenyl phosphate + phosphate + H(+). In terms of biological role, catalyzes the dephosphorylation of undecaprenyl diphosphate (UPP). Confers resistance to bacitracin. The protein is Undecaprenyl-diphosphatase of Synechococcus elongatus (strain ATCC 33912 / PCC 7942 / FACHB-805) (Anacystis nidulans R2).